The primary structure comprises 956 residues: MGEKPEVLDAVLKETVDLENIPIEEVFENLRCTKEGLTATAAQERLSIFGYNKLEEKKESKFSKFLGFMWNPLSWVMEAAAIMAIALANGGGKPPDWQDFVGIITLLIINSTISFIEENNAGNAAAALMARLAPKAKVLRDGKWKEEDAAVLVPGDIISIKLGDIIPADARLLEGDPLKIDQSALTGESLPVTKGPGDGVYSGSTCKQGEIEAVVIATGVHTFFGKAAHLVDSTNQVGHFQKVLTAIGNFCICSIAVGMIIEIIVMYPIQHRKYRPGIDNLLVLLIGGIPIAMPTVLSVTMAIGSHRLAQQGAITKRMTAIEEMAGMDVLCSDKTGTLTLNKLTVDKYLIEVFARGVDADTVVLMAARASRTENQDAIDAAIVGMLADPKEARAGIREIHFLPFNPTDKRTALTYLDGEGKMHRVSKGAPEQILHLAHNKSDIERRVHAVIDKFAERGLRSLAVAYQEVPEGRKESAGGPWQFIALLPLFDPPRHDSAETIRRALNLGVNVKMITGDQLAIGKETGRRLGMGTNMYPSSALLGQTKDESISALPVDELIEKADGFAGVFPEHKYEIVKRLQARKHICGMTGDGVNDAPALKKADIGIAVDDATDAARSASDIVLTEPGLSVIISAVLTSRAIFQRMKNYTIYAVSITIRIVLGFMLLALIWQFDFPPFMVLIIAILNDGTIMTISKDRVKPSPLPDSWKLAEIFTTGVVLGGYLAMMTVIFFWAAYKTNFFPRVFGVSTLEKTATDDFRKLASAIYLQVSTISQALIFVTRSRSWSFMERPGLLLVVAFFIAQLVATLIAVYANWSFAAIEGIGWGWAGVIWLYNIVFYIPLDLXXFLIRYALSGKAWDLVIEQRIAFTRKKDFGKEQRELQWAHAQRTLHGLQVPDPKIFSETTNFNELNQLAEEAKRRAEIARLRELHTLKGHVESVVKLKGLDIETIQQAYTV.

Topologically, residues methionine 1–phenylalanine 65 are cytoplasmic. A helical membrane pass occupies residues leucine 66–isoleucine 85. Residues alanine 86–tryptophan 97 are Extracellular-facing. Residues glutamine 98–glutamate 118 traverse the membrane as a helical segment. At asparagine 119–isoleucine 247 the chain is on the cytoplasmic side. The helical transmembrane segment at glycine 248–proline 268 threads the bilayer. The Extracellular portion of the chain corresponds to isoleucine 269 to isoleucine 278. A helical transmembrane segment spans residues aspartate 279–threonine 300. Residues methionine 301–lysine 647 are Cytoplasmic-facing. The 4-aspartylphosphate intermediate role is filled by aspartate 333. Mg(2+) contacts are provided by aspartate 592 and aspartate 596. A helical transmembrane segment spans residues asparagine 648–leucine 669. The Extracellular portion of the chain corresponds to isoleucine 670–aspartate 674. Residues phenylalanine 675–aspartate 697 form a helical membrane-spanning segment. Over arginine 698 to isoleucine 713 the chain is Cytoplasmic. The chain crosses the membrane as a helical span at residues phenylalanine 714 to alanine 734. Residues alanine 735–arginine 759 are Extracellular-facing. A helical membrane pass occupies residues lysine 760 to threonine 780. At arginine 781–glycine 792 the chain is on the cytoplasmic side. Residues leucine 793–alanine 813 traverse the membrane as a helical segment. Over asparagine 814–glycine 822 the chain is Extracellular. The helical transmembrane segment at isoleucine 823–aspartate 843 threads the bilayer. The Cytoplasmic portion of the chain corresponds to leucine 844–valine 956.

Belongs to the cation transport ATPase (P-type) (TC 3.A.3) family. Type IIIA subfamily. Expressed in roots, stems, leaves from both vegetative and flowering plants, and flowers at early and late stages of development with highest expression levels found in flowers and root tissue.

It is found in the cell membrane. It catalyses the reaction ATP + H2O + H(+)(in) = ADP + phosphate + 2 H(+)(out). Its function is as follows. The plasma membrane ATPase of plants and fungi is a hydrogen ion pump. The proton gradient it generates drives the active transport of nutrients by H(+)-symport. The resulting external acidification and/or internal alkinization may mediate growth responses. This chain is Plasma membrane ATPase 3 (PMA3), found in Nicotiana plumbaginifolia (Leadwort-leaved tobacco).